The sequence spans 457 residues: Pancreatic triacylglycerol lipase (457 aa).

The N-terminal stretch at 1–7 (LLLGAVA) is a signal peptide. Disulfide bonds link Cys12/Cys18 and Cys99/Cys110. Ser161 acts as the Nucleophile in catalysis. The Charge relay system role is filled by Asp185. Residues Glu196, Arg199, Asp201, and Asp204 each contribute to the Ca(2+) site. A disulfide bridge links Cys246 with Cys270. Catalysis depends on His272, which acts as the Charge relay system. 2 disulfides stabilise this stretch: Cys294–Cys305 and Cys308–Cys313. Asn343 carries an N-linked (GlcNAc...) asparagine glycan. Residues 347 to 457 (WRYQIAVTLS…EDILLTLTPC (111 aa)) enclose the PLAT domain. A disulfide bridge links Cys441 with Cys457.

This sequence belongs to the AB hydrolase superfamily. Lipase family. In terms of assembly, forms a 1:1 stoichiometric complex with (pro)colipase/CLPS.

It is found in the secreted. It catalyses the reaction a triacylglycerol + H2O = a diacylglycerol + a fatty acid + H(+). The catalysed reaction is 1,2,3-tributanoylglycerol + H2O = dibutanoylglycerol + butanoate + H(+). It carries out the reaction 1,2,3-tri-(9Z-octadecenoyl)-glycerol + H2O = di-(9Z)-octadecenoylglycerol + (9Z)-octadecenoate + H(+). The enzyme catalyses all-trans-retinyl hexadecanoate + H2O = all-trans-retinol + hexadecanoate + H(+). It catalyses the reaction 1,2-di-(9Z-octadecenoyl)-glycerol + H2O = (9Z-octadecenoyl)-glycerol + (9Z)-octadecenoate + H(+). With respect to regulation, inhibited by bile salts, is reactivated by (pro)colipase/CLPS. Functionally, plays an important role in fat metabolism. It preferentially splits the esters of long-chain fatty acids at positions 1 and 3, producing mainly 2-monoacylglycerol and free fatty acids, and shows considerably higher activity against insoluble emulsified substrates than against soluble ones. The chain is Pancreatic triacylglycerol lipase (PNLIP) from Myocastor coypus (Coypu).